The primary structure comprises 156 residues: SsrA-binding protein (156 aa).

It belongs to the SmpB family.

The protein localises to the cytoplasm. Required for rescue of stalled ribosomes mediated by trans-translation. Binds to transfer-messenger RNA (tmRNA), required for stable association of tmRNA with ribosomes. tmRNA and SmpB together mimic tRNA shape, replacing the anticodon stem-loop with SmpB. tmRNA is encoded by the ssrA gene; the 2 termini fold to resemble tRNA(Ala) and it encodes a 'tag peptide', a short internal open reading frame. During trans-translation Ala-aminoacylated tmRNA acts like a tRNA, entering the A-site of stalled ribosomes, displacing the stalled mRNA. The ribosome then switches to translate the ORF on the tmRNA; the nascent peptide is terminated with the 'tag peptide' encoded by the tmRNA and targeted for degradation. The ribosome is freed to recommence translation, which seems to be the essential function of trans-translation. This is SsrA-binding protein from Lactiplantibacillus plantarum (strain ATCC BAA-793 / NCIMB 8826 / WCFS1) (Lactobacillus plantarum).